The primary structure comprises 280 residues: 2-C-methyl-D-erythritol 4-phosphate cytidylyltransferase (280 aa).

Belongs to the IspD/TarI cytidylyltransferase family. IspD subfamily.

The enzyme catalyses 2-C-methyl-D-erythritol 4-phosphate + CTP + H(+) = 4-CDP-2-C-methyl-D-erythritol + diphosphate. Its pathway is isoprenoid biosynthesis; isopentenyl diphosphate biosynthesis via DXP pathway; isopentenyl diphosphate from 1-deoxy-D-xylulose 5-phosphate: step 2/6. In terms of biological role, catalyzes the formation of 4-diphosphocytidyl-2-C-methyl-D-erythritol from CTP and 2-C-methyl-D-erythritol 4-phosphate (MEP). In Psychrobacter cryohalolentis (strain ATCC BAA-1226 / DSM 17306 / VKM B-2378 / K5), this protein is 2-C-methyl-D-erythritol 4-phosphate cytidylyltransferase.